The following is a 551-amino-acid chain: Solute carrier family 22 member 3 (551 aa).

Residues 21–41 (VFLLLCLTGVTFAFLFVGVVF) traverse the membrane as a helical segment. Residues Asn-72, Asn-99, and Asn-114 are each glycosylated (N-linked (GlcNAc...) asparagine). The helical transmembrane segment at 177 to 197 (LIVYLISCFGVGITGVVVAFA) threads the bilayer. Residue Asn-199 is glycosylated (N-linked (GlcNAc...) asparagine). Helical transmembrane passes span 236–256 (IVGIVIQMFFTLGIIILPGIA) and 264–284 (GIQLAISLPSFLFLLYYWVVP). The short motif at 284 to 288 (PESPR) is the Proline-rich sequence element. N-linked (GlcNAc...) asparagine glycosylation occurs at Asn-317. 3 helical membrane passes run 376–396 (MDFFISGLVELPGALLILLTI), 463–483 (FGVSLCSGLCDFGGIIAPFLL), and 493–513 (LPLIIFGILASVCGGLVMLLP).

The protein belongs to the major facilitator (TC 2.A.1) superfamily. Organic cation transporter (TC 2.A.1.19) family. In terms of tissue distribution, highly expressed in placenta. Expressed in intestine, hear, kidney and lung. Widely expressed in brain, particularly in hippocampus, cerebellum, cerebral cortex. In the brain, expressed predominantly in regions located at the brain-cerebrospinal fluid border, with expression extending to regions that belong to monoaminergic pathways such as raphe nuclei, striatum and thalamus. In brain, expressed in neurons and glial cells of amygdala. Expression is low in kidney and lung and undetectable in liver. Expressed in Sertoli cells in testis. Expressed in tracheal and bronchial epithelium of the respiratory tract, where it localizes to the apical membrane of ciliated and brush cells, and in basal cells.

Its subcellular location is the cell membrane. The protein localises to the apical cell membrane. It is found in the basolateral cell membrane. It localises to the mitochondrion membrane. The protein resides in the endomembrane system. Its subcellular location is the nucleus membrane. The protein localises to the nucleus outer membrane. The catalysed reaction is (R)-noradrenaline(out) = (R)-noradrenaline(in). The enzyme catalyses (R)-adrenaline(out) = (R)-adrenaline(in). It carries out the reaction serotonin(out) = serotonin(in). It catalyses the reaction dopamine(out) = dopamine(in). The catalysed reaction is histamine(out) = histamine(in). The enzyme catalyses tyramine(in) = tyramine(out). It carries out the reaction guanidine(out) = guanidine(in). It catalyses the reaction agmatine(out) = agmatine(in). The catalysed reaction is spermidine(in) = spermidine(out). The enzyme catalyses L-histidyl-L-proline diketopiperazine(in) = L-histidyl-L-proline diketopiperazine(out). It carries out the reaction (R)-salsolinol(in) = (R)-salsolinol(out). Its function is as follows. Electrogenic voltage-dependent transporter that mediates the transport of a variety of organic cations such as endogenous bioactive amines, cationic drugs and xenobiotics. Cation cellular uptake or release is driven by the electrochemical potential, i.e. membrane potential and concentration gradient. Functions as a Na(+)- and Cl(-)-independent, bidirectional uniporter. Implicated in neuronal monoamine neurotransmitters cellular uptake such as dopamine, adrenaline/epinephrine, noradrenaline/norepinephrine, histamine, serotonin and tyramine, thereby supporting a role in homeostatic regulation of aminergic neurotransmission in the brain. Transports dopaminergic neuromodulators cyclo(his-pro) and salsolinol with low efficiency. May be involved in the uptake and disposition of cationic compounds by renal clearance from the blood flow. May contribute to regulate the transport of cationic compounds in testis across the blood-testis-barrier. Mediates the transport of polyamine spermidine and putrescine. Mediates the bidirectional transport of polyamine agmatine. Also transports guanidine. May also mediate intracellular transport of organic cations, thereby playing a role in amine metabolism and intracellular signaling. The polypeptide is Solute carrier family 22 member 3 (Rattus norvegicus (Rat)).